The primary structure comprises 310 residues: ADP-L-glycero-D-manno-heptose-6-epimerase (310 aa).

NADP(+)-binding positions include 10-11 (LI), 31-32 (DN), Lys-38, Lys-53, 75-79 (EGACS), and Asn-92. Tyr-140 (proton acceptor) is an active-site residue. Lys-144 lines the NADP(+) pocket. A substrate-binding site is contributed by Asn-169. NADP(+) is bound by residues Val-170 and Lys-178. Lys-178 serves as the catalytic Proton acceptor. Substrate contacts are provided by residues Ser-180, His-187, 201-204 (FAGS), Arg-209, and Tyr-272.

The protein belongs to the NAD(P)-dependent epimerase/dehydratase family. HldD subfamily. As to quaternary structure, homopentamer. Requires NADP(+) as cofactor.

The enzyme catalyses ADP-D-glycero-beta-D-manno-heptose = ADP-L-glycero-beta-D-manno-heptose. The protein operates within nucleotide-sugar biosynthesis; ADP-L-glycero-beta-D-manno-heptose biosynthesis; ADP-L-glycero-beta-D-manno-heptose from D-glycero-beta-D-manno-heptose 7-phosphate: step 4/4. Catalyzes the interconversion between ADP-D-glycero-beta-D-manno-heptose and ADP-L-glycero-beta-D-manno-heptose via an epimerization at carbon 6 of the heptose. This Erwinia tasmaniensis (strain DSM 17950 / CFBP 7177 / CIP 109463 / NCPPB 4357 / Et1/99) protein is ADP-L-glycero-D-manno-heptose-6-epimerase.